A 558-amino-acid polypeptide reads, in one-letter code: MDFKQKVVDLVSEQVDLPKEKISMLIERPKNPKMGDYAFPAFALAKIEHKNPALIAKDIAEKISDDNFTSIQAVGPYVNFAIDHAKLVNATLNDVLTEKEHFGDQKLGEGNVPIDMSSPNIAKPMSMGHLRSTVIGNSIAKTLEKVGYTPIKINYLGDYGTQFGKLITAYRLWGNEGDVKKDPITNLFHYYVKFHEEAEKDPKLEDEGRAAFKKLENGDEEEIKLWKWFREVSLQEFNRIYKELGVTFDSYNGEAFFNDKMQPVVDELREKGLLEESRGAQVVNLGEDENPALILKSDGSSLYMTRDLAAALYRKKEYDFVMSLYVAGGEQTGHFKQLKQVLKKMGYDWSDNIHHIPFGLITQGGKKLSTRKGNVVFLDQVLKDAVSLAEQQIEEKNPNLSNKKQVAHDVGVGAVVFHDLKNDRMDNFDFDLEEVVRFEGDTGPYVQYTNARAQSILRKANKEISMDNLSLNDDWSFAVAKALADFPAIVEKASEKFEPSIIAKYALDLSKKFNKYYANVRILDEDNQLNARLALVQATSIVLTEALRLLGVNAPKEM.

The 'HIGH' region signature appears at 119–129; the sequence is PNIAKPMSMGH.

It belongs to the class-I aminoacyl-tRNA synthetase family. As to quaternary structure, monomer.

It localises to the cytoplasm. The enzyme catalyses tRNA(Arg) + L-arginine + ATP = L-arginyl-tRNA(Arg) + AMP + diphosphate. The sequence is that of Arginine--tRNA ligase from Lactobacillus johnsonii (strain CNCM I-12250 / La1 / NCC 533).